The chain runs to 441 residues: Arginine biosynthesis bifunctional protein ArgJ, mitochondrial (441 aa).

Residues Thr177, Lys204, Thr215, Glu301, Asn436, and Ser441 each contribute to the substrate site. The active-site Nucleophile is Thr215.

This sequence belongs to the ArgJ family. As to quaternary structure, heterodimer of an alpha and a beta chain. The alpha and beta chains are autoproteolytically processed from a single precursor protein within the mitochondrion.

The protein localises to the mitochondrion matrix. The enzyme catalyses N(2)-acetyl-L-ornithine + L-glutamate = N-acetyl-L-glutamate + L-ornithine. It catalyses the reaction L-glutamate + acetyl-CoA = N-acetyl-L-glutamate + CoA + H(+). It functions in the pathway amino-acid biosynthesis; L-arginine biosynthesis; L-ornithine and N-acetyl-L-glutamate from L-glutamate and N(2)-acetyl-L-ornithine (cyclic): step 1/1. Its pathway is amino-acid biosynthesis; L-arginine biosynthesis; N(2)-acetyl-L-ornithine from L-glutamate: step 1/4. In terms of biological role, catalyzes two activities which are involved in the cyclic version of arginine biosynthesis: the synthesis of acetylglutamate from glutamate and acetyl-CoA, and of ornithine by transacetylation between acetylornithine and glutamate. In Kluyveromyces lactis (strain ATCC 8585 / CBS 2359 / DSM 70799 / NBRC 1267 / NRRL Y-1140 / WM37) (Yeast), this protein is Arginine biosynthesis bifunctional protein ArgJ, mitochondrial.